Consider the following 474-residue polypeptide: MHLLQCLLSTISLASTVTAFVPYSFNLEVSTEGPPSNDVARRFVPWKLLLDDSYNNHGSSSNGVSLTLDLKKFPVRRDNKYKVVLADEPTTPNTAALNQEGLDYSYFATVRVGSQGQQMWLVLDTGGPNTWVFGSDCTTVACQRHETFGEAASKSLKLLPLNWAVGYGTGLVSGVLGTDSLSLAGLDVNMTFGLAKNASTDFESYPVDGILGLGRSANSNFNTPSFMETVATQRLLKSNIIGFSFSRNSDGARDGAANFGDLDTTRFTGDIVYTNTTGDSNNWRIPLDDASVNGTPCRFVNKTAVIDTGTSYAMLPPKDATVLHNLIPGAVTTSHGQNFTLPCNSTAVVQVSFSGLSYNISPKDYVGPAYGSACLSTIVGQALYGDDVWLLGDVFLKNVYSVFDYDNHRIGFANRSVPIASPTTTVAAAANPSATDGAGSTLTGSMAVHTGSASIVSRFVHWPFIFALLCMVLV.

An N-terminal signal peptide occupies residues 1-19 (MHLLQCLLSTISLASTVTA). The 308-residue stretch at 106 to 413 (YFATVRVGSQ…DYDNHRIGFA (308 aa)) folds into the Peptidase A1 domain. D124 is a catalytic residue. 4 N-linked (GlcNAc...) asparagine glycosylation sites follow: N189, N197, N275, and N301. The active site involves D307. N338, N344, and N414 each carry an N-linked (GlcNAc...) asparagine glycan. S452 carries the GPI-anchor amidated serine lipid modification. Residues 453–474 (ASIVSRFVHWPFIFALLCMVLV) constitute a propeptide, removed in mature form.

The protein belongs to the peptidase A1 family.

The protein localises to the cell membrane. Its function is as follows. Secreted aspartic-type endopeptidase which is secreted and contributes to virulence. In Aspergillus fumigatus (strain ATCC MYA-4609 / CBS 101355 / FGSC A1100 / Af293) (Neosartorya fumigata), this protein is Aspartic-type endopeptidase ctsD (ctsD).